Reading from the N-terminus, the 443-residue chain is Glucose-6-phosphate isomerase (443 aa).

Glutamate 285 functions as the Proton donor in the catalytic mechanism. Active-site residues include histidine 306 and lysine 420.

The protein belongs to the GPI family.

It is found in the cytoplasm. The catalysed reaction is alpha-D-glucose 6-phosphate = beta-D-fructose 6-phosphate. It participates in carbohydrate biosynthesis; gluconeogenesis. Its pathway is carbohydrate degradation; glycolysis; D-glyceraldehyde 3-phosphate and glycerone phosphate from D-glucose: step 2/4. In terms of biological role, catalyzes the reversible isomerization of glucose-6-phosphate to fructose-6-phosphate. This is Glucose-6-phosphate isomerase from Staphylococcus epidermidis (strain ATCC 12228 / FDA PCI 1200).